Consider the following 119-residue polypeptide: UPF0102 protein HI_1656 (119 aa).

Belongs to the UPF0102 family.

The sequence is that of UPF0102 protein HI_1656 from Haemophilus influenzae (strain ATCC 51907 / DSM 11121 / KW20 / Rd).